Reading from the N-terminus, the 244-residue chain is Agamous-like MADS-box protein AGL13 (244 aa).

The MADS-box domain occupies 3 to 57 (RGKVEVKRIENKITRQVTFSKRKSGLLKKAYELSVLCDAEVSLIIFSTGGKLYEF). A K-box domain is found at 85–175 (TQGLRQEVTK…KLETEDHDFK (91 aa)).

Its subcellular location is the nucleus. Its function is as follows. Probable transcription factor. This is Agamous-like MADS-box protein AGL13 (AGL13) from Arabidopsis thaliana (Mouse-ear cress).